Here is a 176-residue protein sequence, read N- to C-terminus: Large ribosomal subunit protein uL6 (176 aa).

This sequence belongs to the universal ribosomal protein uL6 family. Part of the 50S ribosomal subunit.

Its function is as follows. This protein binds to the 23S rRNA, and is important in its secondary structure. It is located near the subunit interface in the base of the L7/L12 stalk, and near the tRNA binding site of the peptidyltransferase center. This Burkholderia multivorans (strain ATCC 17616 / 249) protein is Large ribosomal subunit protein uL6.